The following is a 109-amino-acid chain: MFGKGGLGGLMKQAQQMQERMQKMQEEIAQLEVTGESGAGLVKVTINGAHNCRRIEIDPSLMEDDKEMVEDLVAAAFNDAVRRAEEMQKEKMASVTAGMQLPPGMKFPF.

A disordered region spans residues 1–21; sequence MFGKGGLGGLMKQAQQMQERM. Residues 10–19 show a composition bias toward low complexity; that stretch reads LMKQAQQMQE.

Belongs to the YbaB/EbfC family. In terms of assembly, homodimer.

The protein resides in the cytoplasm. It is found in the nucleoid. In terms of biological role, binds to DNA and alters its conformation. May be involved in regulation of gene expression, nucleoid organization and DNA protection. This chain is Nucleoid-associated protein APL_0075, found in Actinobacillus pleuropneumoniae serotype 5b (strain L20).